A 274-amino-acid polypeptide reads, in one-letter code: Hydroxyethylthiazole kinase (274 aa).

Met46 provides a ligand contact to substrate. ATP-binding residues include Arg122 and Thr173. Gly200 is a substrate binding site.

Belongs to the Thz kinase family. Mg(2+) is required as a cofactor.

It carries out the reaction 5-(2-hydroxyethyl)-4-methylthiazole + ATP = 4-methyl-5-(2-phosphooxyethyl)-thiazole + ADP + H(+). Its pathway is cofactor biosynthesis; thiamine diphosphate biosynthesis; 4-methyl-5-(2-phosphoethyl)-thiazole from 5-(2-hydroxyethyl)-4-methylthiazole: step 1/1. Its function is as follows. Catalyzes the phosphorylation of the hydroxyl group of 4-methyl-5-beta-hydroxyethylthiazole (THZ). The protein is Hydroxyethylthiazole kinase of Clostridium tetani (strain Massachusetts / E88).